The chain runs to 256 residues: Ubiquinone/menaquinone biosynthesis C-methyltransferase UbiE (256 aa).

S-adenosyl-L-methionine contacts are provided by residues threonine 79, aspartate 100, and 128 to 129 (DA).

Belongs to the class I-like SAM-binding methyltransferase superfamily. MenG/UbiE family.

The enzyme catalyses a 2-demethylmenaquinol + S-adenosyl-L-methionine = a menaquinol + S-adenosyl-L-homocysteine + H(+). The catalysed reaction is a 2-methoxy-6-(all-trans-polyprenyl)benzene-1,4-diol + S-adenosyl-L-methionine = a 5-methoxy-2-methyl-3-(all-trans-polyprenyl)benzene-1,4-diol + S-adenosyl-L-homocysteine + H(+). Its pathway is quinol/quinone metabolism; menaquinone biosynthesis; menaquinol from 1,4-dihydroxy-2-naphthoate: step 2/2. It functions in the pathway cofactor biosynthesis; ubiquinone biosynthesis. Its function is as follows. Methyltransferase required for the conversion of demethylmenaquinol (DMKH2) to menaquinol (MKH2) and the conversion of 2-polyprenyl-6-methoxy-1,4-benzoquinol (DDMQH2) to 2-polyprenyl-3-methyl-6-methoxy-1,4-benzoquinol (DMQH2). The polypeptide is Ubiquinone/menaquinone biosynthesis C-methyltransferase UbiE (Pseudomonas savastanoi pv. phaseolicola (strain 1448A / Race 6) (Pseudomonas syringae pv. phaseolicola (strain 1448A / Race 6))).